The following is a 225-amino-acid chain: Urease accessory protein UreG (225 aa).

Residue 25–32 participates in GTP binding; sequence GPVGAGKT.

The protein belongs to the SIMIBI class G3E GTPase family. UreG subfamily. In terms of assembly, homodimer. UreD, UreF and UreG form a complex that acts as a GTP-hydrolysis-dependent molecular chaperone, activating the urease apoprotein by helping to assemble the nickel containing metallocenter of UreC. The UreE protein probably delivers the nickel.

Its subcellular location is the cytoplasm. Facilitates the functional incorporation of the urease nickel metallocenter. This process requires GTP hydrolysis, probably effectuated by UreG. This is Urease accessory protein UreG from Haemophilus influenzae (strain ATCC 51907 / DSM 11121 / KW20 / Rd).